Here is a 349-residue protein sequence, read N- to C-terminus: Cyclic AMP-dependent transcription factor ATF-4 (349 aa).

Disordered regions lie at residues 49–75 (FSSD…TGKE), 204–271 (PPCV…TAKV), and 279–298 (KLKK…QKKR). Pro-60 is modified (4-hydroxyproline). Thr-212 is modified (phosphothreonine). Phosphoserine occurs at positions 214, 218, 223, 230, and 234. The BetaTrCP degron motif motif lies at 214-223 (SDNDSGICMS). Positions 229-239 (GSPQHSPSTSR) are enriched in polar residues. The residue at position 235 (Pro-235) is a 4-hydroxyproline. Residue Ser-247 is modified to Phosphoserine. The residue at position 251 (Ser-251) is a Phosphoserine; by RPS6KA3. Residues Lys-258 and Lys-270 each participate in a glycyl lysine isopeptide (Lys-Gly) (interchain with G-Cter in SUMO2) cross-link. A bZIP domain is found at 276-339 (LDKKLKKMEQ…QYLKDLIEEV (64 aa)). The tract at residues 278 to 298 (KKLKKMEQNKTAATRYRQKKR) is basic motif. The segment at 303 to 339 (ALTGECKELEKKNEALKEKADSLAKEIQYLKDLIEEV) is interaction with GABBR1. The segment at 304–332 (LTGECKELEKKNEALKEKADSLAKEIQYL) is leucine-zipper. Lys-309 is subject to N6-acetyllysine.

It belongs to the bZIP family. Binds DNA as a homodimer and as a heterodimer. Heterodimer; heterodimerizes with CEBPB. Heterodimer; heterodimerizes with DDIT3/CHOP. Interacts with CEP290 (via an N-terminal region). Interacts with NEK6, DAPK2 (isoform 2) and ZIPK/DAPK3. Interacts (via its leucine zipper domain) with GABBR1 and GABBR2 (via their C-termini). Forms a heterodimer with TXLNG in osteoblasts. Interacts (via its DNA binding domain) with FOXO1 (C-terminal half); the interaction occurs in osteoblasts and regulates glucose homeostasis through suppression of beta-cell proliferation and a decrease in insulin production. Interacts with SATB2; the interaction results in enhanced DNA binding and transactivation by these transcription factors. Interacts with ABRAXAS2. Interacts with TRIB3, inhibiting the transactivation activity of ATF4. Interacts with DISC1; which inhibits ATF4 transcription factor activity by disrupting ATF4 dimerization and DNA-binding. Interacts with EP300/p300; EP300/p300 stabilizes ATF4 and increases its transcriptional activity independently of its catalytic activity by preventing its ubiquitination. In terms of processing, ubiquitinated by SCF(BTRC) in response to mTORC1 signal, followed by proteasomal degradation and leading to down-regulate expression of SIRT4. Interaction with EP300/p300 inhibits ubiquitination by SCF(BTRC). Post-translationally, phosphorylation at Ser-251 by RPS6KA3/RSK2 in osteoblasts enhances transactivation activity and promotes osteoblast differentiation. Phosphorylated on the betaTrCP degron motif at Ser-218, followed by phosphorylation at Thr-212, Ser-223, Ser-230, Ser-234 and Ser-247, promoting interaction with BTRC and ubiquitination. Phosphorylation is promoted by mTORC1. Phosphorylation at Ser-214 by CK2 decreases its stability. Phosphorylated by NEK6. Hydroxylated by PHD3, leading to decreased protein stability. In terms of tissue distribution, ubiquitously expressed in adults.

It is found in the nucleus. Its subcellular location is the nucleus speckle. It localises to the cytoplasm. The protein localises to the cell membrane. The protein resides in the cytoskeleton. It is found in the microtubule organizing center. Its subcellular location is the centrosome. Functionally, transcription factor that binds the cAMP response element (CRE) (consensus: 5'-GTGACGT[AC][AG]-3') and displays two biological functions, as regulator of metabolic and redox processes under normal cellular conditions, and as master transcription factor during integrated stress response (ISR). Binds to asymmetric CRE's as a heterodimer and to palindromic CRE's as a homodimer. Core effector of the ISR, which is required for adaptation to various stress such as endoplasmic reticulum (ER) stress, amino acid starvation, mitochondrial stress or oxidative stress. During ISR, ATF4 translation is induced via an alternative ribosome translation re-initiation mechanism in response to EIF2S1/eIF-2-alpha phosphorylation, and stress-induced ATF4 acts as a master transcription factor of stress-responsive genes in order to promote cell recovery. Promotes the transcription of genes linked to amino acid sufficiency and resistance to oxidative stress to protect cells against metabolic consequences of ER oxidation. Activates the transcription of NLRP1, possibly in concert with other factors in response to ER stress. Activates the transcription of asparagine synthetase (ASNS) in response to amino acid deprivation or ER stress. However, when associated with DDIT3/CHOP, the transcriptional activation of the ASNS gene is inhibited in response to amino acid deprivation. Together with DDIT3/CHOP, mediates programmed cell death by promoting the expression of genes involved in cellular amino acid metabolic processes, mRNA translation and the terminal unfolded protein response (terminal UPR), a cellular response that elicits programmed cell death when ER stress is prolonged and unresolved. Activates the expression of COX7A2L/SCAF1 downstream of the EIF2AK3/PERK-mediated unfolded protein response, thereby promoting formation of respiratory chain supercomplexes and increasing mitochondrial oxidative phosphorylation. Together with DDIT3/CHOP, activates the transcription of the IRS-regulator TRIB3 and promotes ER stress-induced neuronal cell death by regulating the expression of BBC3/PUMA in response to ER stress. May cooperate with the UPR transcriptional regulator QRICH1 to regulate ER protein homeostasis which is critical for cell viability in response to ER stress. In the absence of stress, ATF4 translation is at low levels and it is required for normal metabolic processes such as embryonic lens formation, fetal liver hematopoiesis, bone development and synaptic plasticity. Acts as a regulator of osteoblast differentiation in response to phosphorylation by RPS6KA3/RSK2: phosphorylation in osteoblasts enhances transactivation activity and promotes expression of osteoblast-specific genes and post-transcriptionally regulates the synthesis of Type I collagen, the main constituent of the bone matrix. Cooperates with FOXO1 in osteoblasts to regulate glucose homeostasis through suppression of beta-cell production and decrease in insulin production. Activates transcription of SIRT4. Regulates the circadian expression of the core clock component PER2 and the serotonin transporter SLC6A4. Binds in a circadian time-dependent manner to the cAMP response elements (CRE) in the SLC6A4 and PER2 promoters and periodically activates the transcription of these genes. Mainly acts as a transcriptional activator in cellular stress adaptation, but it can also act as a transcriptional repressor: acts as a regulator of synaptic plasticity by repressing transcription, thereby inhibiting induction and maintenance of long-term memory. Regulates synaptic functions via interaction with DISC1 in neurons, which inhibits ATF4 transcription factor activity by disrupting ATF4 dimerization and DNA-binding. This chain is Cyclic AMP-dependent transcription factor ATF-4, found in Mus musculus (Mouse).